Consider the following 366-residue polypeptide: Ribosomal RNA large subunit methyltransferase M (366 aa).

S-adenosyl-L-methionine-binding positions include Ser188, 221-224 (CPGG), Asp240, Asp260, and Asp277. The active-site Proton acceptor is the Lys306.

Belongs to the class I-like SAM-binding methyltransferase superfamily. RNA methyltransferase RlmE family. RlmM subfamily. In terms of assembly, monomer.

It localises to the cytoplasm. The enzyme catalyses cytidine(2498) in 23S rRNA + S-adenosyl-L-methionine = 2'-O-methylcytidine(2498) in 23S rRNA + S-adenosyl-L-homocysteine + H(+). Its function is as follows. Catalyzes the 2'-O-methylation at nucleotide C2498 in 23S rRNA. The polypeptide is Ribosomal RNA large subunit methyltransferase M (Salmonella dublin (strain CT_02021853)).